A 584-amino-acid chain; its full sequence is Transcription factor COE1 (584 aa).

Methionine 1 is modified (N-acetylmethionine). Over residues methionine 1–serine 14 the composition is skewed to polar residues. Residues methionine 1–glycine 21 are disordered. Residue lysine 16 forms a Glycyl lysine isopeptide (Lys-Gly) (interchain with G-Cter in SUMO1); alternate linkage. Lysine 16 is covalently cross-linked (Glycyl lysine isopeptide (Lys-Gly) (interchain with G-Cter in SUMO2); alternate). The tract at residues arginine 63–asparagine 66 is interaction with DNA. The C5-type zinc finger occupies cysteine 151–cysteine 170. Interaction with DNA regions lie at residues asparagine 197–asparagine 204 and asparagine 236–lysine 239. In terms of domain architecture, IPT/TIG spans proline 255–threonine 338. A disordered region spans residues glycine 450–asparagine 473.

The protein belongs to the COE family. Homodimer. Interacts with ZNF423 and ZNF521, leading to prevent EBF1 to bind DNA and activate target genes. Interacts with CCR4-NOT component CNOT3. As to expression, expressed exclusively in olfactory receptor neurons and their precursors.

It is found in the nucleus. In terms of biological role, key pioneer transcription factor of B-cell specification and commitment. Recognizes variations of the palindromic sequence 5'-ATTCCCNNGGGAATT-3'. Operates in a transcription factor network to activate B-cell-specific genes and repress genes associated with alternative cell fates. For instance, positively regulates many B-cell specific genes including BCR or CD40 while repressing genes that direct cells into alternative lineages, including GATA3 and TCF7 for the T-cell lineage. In addition to its role during lymphopoiesis, controls the thermogenic gene program in adipocytes during development and in response to environmental cold. The chain is Transcription factor COE1 (Ebf1) from Rattus norvegicus (Rat).